The chain runs to 368 residues: Phosphate acyltransferase (368 aa).

The disordered stretch occupies residues 335-368 (VSLGDGEHDAGGAGHTGPAAGQHAEPPAAQSSKA).

Belongs to the PlsX family. As to quaternary structure, homodimer. Probably interacts with PlsY.

It localises to the cytoplasm. It catalyses the reaction a fatty acyl-[ACP] + phosphate = an acyl phosphate + holo-[ACP]. It functions in the pathway lipid metabolism; phospholipid metabolism. Functionally, catalyzes the reversible formation of acyl-phosphate (acyl-PO(4)) from acyl-[acyl-carrier-protein] (acyl-ACP). This enzyme utilizes acyl-ACP as fatty acyl donor, but not acyl-CoA. The protein is Phosphate acyltransferase of Burkholderia vietnamiensis (strain G4 / LMG 22486) (Burkholderia cepacia (strain R1808)).